We begin with the raw amino-acid sequence, 272 residues long: Shikimate dehydrogenase (NADP(+)) (272 aa).

Residues 14–16 and T61 each bind shikimate; that span reads SKS. Residue K65 is the Proton acceptor of the active site. E77 contributes to the NADP(+) binding site. Shikimate is bound by residues N86 and D102. NADP(+)-binding positions include 126–130, 149–154, and M213; these read GAGGA and NRTVSR. Y215 lines the shikimate pocket. Position 237 (G237) interacts with NADP(+).

Belongs to the shikimate dehydrogenase family. Homodimer.

It carries out the reaction shikimate + NADP(+) = 3-dehydroshikimate + NADPH + H(+). It participates in metabolic intermediate biosynthesis; chorismate biosynthesis; chorismate from D-erythrose 4-phosphate and phosphoenolpyruvate: step 4/7. Its function is as follows. Involved in the biosynthesis of the chorismate, which leads to the biosynthesis of aromatic amino acids. Catalyzes the reversible NADPH linked reduction of 3-dehydroshikimate (DHSA) to yield shikimate (SA). The protein is Shikimate dehydrogenase (NADP(+)) of Escherichia coli O6:H1 (strain CFT073 / ATCC 700928 / UPEC).